A 430-amino-acid chain; its full sequence is Enolase (430 aa).

(2R)-2-phosphoglycerate is bound at residue glutamine 167. The active-site Proton donor is glutamate 209. Mg(2+) contacts are provided by aspartate 245, glutamate 286, and aspartate 313. Residues lysine 338, arginine 367, serine 368, and lysine 389 each coordinate (2R)-2-phosphoglycerate. Residue lysine 338 is the Proton acceptor of the active site.

The protein belongs to the enolase family. The cofactor is Mg(2+).

Its subcellular location is the cytoplasm. The protein resides in the secreted. It localises to the cell surface. The catalysed reaction is (2R)-2-phosphoglycerate = phosphoenolpyruvate + H2O. The protein operates within carbohydrate degradation; glycolysis; pyruvate from D-glyceraldehyde 3-phosphate: step 4/5. Functionally, catalyzes the reversible conversion of 2-phosphoglycerate (2-PG) into phosphoenolpyruvate (PEP). It is essential for the degradation of carbohydrates via glycolysis. This Parasynechococcus marenigrum (strain WH8102) protein is Enolase.